The chain runs to 1107 residues: Unconventional myosin-Ie (1107 aa).

A Myosin motor domain is found at 19–692 (SGVDDMVLLS…SLFLLEEMRE (674 aa)). 112-119 (GESGAGKT) contributes to the ATP binding site. The interval 581 to 591 (PHYIRCIKPNE) is actin-binding. An IQ domain is found at 695 to 724 (YDGYARVIQKTWRKFVARKKYVQMREDASD). In terms of domain architecture, TH1 spans 730 to 922 (KERRRNSINR…NKVLQVSIGP (193 aa)). Positions 920–1052 (IGPGLPKNAR…KPQPKPKPQV (133 aa)) are disordered. Polar residues-rich tracts occupy residues 933–949 (RNTV…NNNY), 977–989 (SGNQ…SLYT), and 998–1012 (RQQS…QTPE). The residue at position 1001 (S1001) is a Phosphoserine. Residues 1034-1051 (RPPPAGGRPKPQPKPKPQ) show a composition bias toward pro residues. The SH3 domain maps to 1050–1107 (PQVPQCKALYAYDAQDTDELSFNANDVIDIIKEDPSGWWTGRLRGKQGLFPNNYVTKI).

It belongs to the TRAFAC class myosin-kinesin ATPase superfamily. Myosin family. As to quaternary structure, interacts with CALM and F-actin. Interacts (via SH3 domain) with SYNJ1, DNM1 and DNM2. Interacts with ARL14EP. Interacts with CARMIL1. In terms of tissue distribution, detected in brain stem, brain cortex, cerebellum, stomach, colon, heart, lung, liver, spleen and kidney. Detected in utricle, cochlea, outer hair cell bundle cuticular plate and vestibular epithelia (at protein level). Detected in cochlea and vestibular tissues. Detected in kidney, lung, spleen and intestine.

It localises to the cytoplasm. The protein localises to the cytoskeleton. The protein resides in the cytoplasmic vesicle. It is found in the clathrin-coated vesicle. Its subcellular location is the cell junction. In terms of biological role, myosins are actin-based motor molecules with ATPase activity. Unconventional myosins serve in intracellular movements. Their highly divergent tails bind to membranous compartments, which are then moved relative to actin filaments. Binds to membranes containing anionic phospholipids via its tail domain. Involved in clathrin-mediated endocytosis and intracellular movement of clathrin-coated vesicles. Required for normal morphology of the glomerular basement membrane, normal development of foot processes by kidney podocytes and normal kidney function. In dendritic cells, may control the movement of class II-containing cytoplasmic vesicles along the actin cytoskeleton by connecting them with the actin network via ARL14EP and ARL14. The protein is Unconventional myosin-Ie (Myo1e) of Rattus norvegicus (Rat).